Here is a 134-residue protein sequence, read N- to C-terminus: Lymphocyte antigen 6A-2/6E-1 (134 aa).

The first 26 residues, 1 to 26, serve as a signal peptide directing secretion; that stretch reads MDTSHTTKSCLLILLVALLCAERAQG. A UPAR/Ly6 domain is found at 27 to 119; that stretch reads LECYQCYGVP…NGGSTWTMAG (93 aa). Intrachain disulfides connect Cys-29–Cys-53, Cys-32–Cys-41, Cys-46–Cys-74, Cys-78–Cys-98, and Cys-99–Cys-104. Residue Gly-112 is the site of GPI-anchor amidated glycine attachment. Positions 113–134 are cleaved as a propeptide — removed in mature form; that stretch reads STWTMAGVLLFSLSSVLLQTLL.

In terms of processing, O-glycosylated. Not N-glycosylated. Not phosphorylated. In terms of tissue distribution, widely expressed.

The protein localises to the cell membrane. T-cell activation. The protein is Lymphocyte antigen 6A-2/6E-1 (Ly6a) of Mus musculus (Mouse).